Consider the following 452-residue polypeptide: Bifunctional protein GlmU (452 aa).

The tract at residues 1 to 232 (MTTRTSLTIV…EDEVRGINTK (232 aa)) is pyrophosphorylase. Residues 11–14 (LAAG), Lys-25, Gln-78, and 83–84 (GT) contribute to the UDP-N-acetyl-alpha-D-glucosamine site. Asp-108 is a binding site for Mg(2+). Residues Gly-144, Glu-158, Asn-173, and Asn-230 each contribute to the UDP-N-acetyl-alpha-D-glucosamine site. Asn-230 contacts Mg(2+). Positions 233-253 (AQLAEAEAVMQTRLRQAAMTA) are linker. Positions 254–452 (GVTLISPETI…SARARKPKTS (199 aa)) are N-acetyltransferase. Positions 319 and 337 each coordinate UDP-N-acetyl-alpha-D-glucosamine. The Proton acceptor role is filled by His-349. Positions 352 and 363 each coordinate UDP-N-acetyl-alpha-D-glucosamine. Residues Ala-366, 372–373 (NY), Ser-391, Ser-409, and Arg-426 each bind acetyl-CoA.

In the N-terminal section; belongs to the N-acetylglucosamine-1-phosphate uridyltransferase family. The protein in the C-terminal section; belongs to the transferase hexapeptide repeat family. As to quaternary structure, homotrimer. Mg(2+) is required as a cofactor.

It is found in the cytoplasm. It catalyses the reaction alpha-D-glucosamine 1-phosphate + acetyl-CoA = N-acetyl-alpha-D-glucosamine 1-phosphate + CoA + H(+). The enzyme catalyses N-acetyl-alpha-D-glucosamine 1-phosphate + UTP + H(+) = UDP-N-acetyl-alpha-D-glucosamine + diphosphate. It participates in nucleotide-sugar biosynthesis; UDP-N-acetyl-alpha-D-glucosamine biosynthesis; N-acetyl-alpha-D-glucosamine 1-phosphate from alpha-D-glucosamine 6-phosphate (route II): step 2/2. It functions in the pathway nucleotide-sugar biosynthesis; UDP-N-acetyl-alpha-D-glucosamine biosynthesis; UDP-N-acetyl-alpha-D-glucosamine from N-acetyl-alpha-D-glucosamine 1-phosphate: step 1/1. Its pathway is bacterial outer membrane biogenesis; LPS lipid A biosynthesis. Its function is as follows. Catalyzes the last two sequential reactions in the de novo biosynthetic pathway for UDP-N-acetylglucosamine (UDP-GlcNAc). The C-terminal domain catalyzes the transfer of acetyl group from acetyl coenzyme A to glucosamine-1-phosphate (GlcN-1-P) to produce N-acetylglucosamine-1-phosphate (GlcNAc-1-P), which is converted into UDP-GlcNAc by the transfer of uridine 5-monophosphate (from uridine 5-triphosphate), a reaction catalyzed by the N-terminal domain. The chain is Bifunctional protein GlmU from Rhodopseudomonas palustris (strain BisB5).